We begin with the raw amino-acid sequence, 102 residues long: Large ribosomal subunit protein bL21 (102 aa).

The protein belongs to the bacterial ribosomal protein bL21 family. Part of the 50S ribosomal subunit. Contacts protein L20.

Its function is as follows. This protein binds to 23S rRNA in the presence of protein L20. This chain is Large ribosomal subunit protein bL21, found in Finegoldia magna (strain ATCC 29328 / DSM 20472 / WAL 2508) (Peptostreptococcus magnus).